A 252-amino-acid polypeptide reads, in one-letter code: MLAKRIIPCLDVKEGRVVKGVNFIGLQDVGDPVEIAALYNDAGADEIVFLDITATHEGRKTIIDVVEKTASKVFIPLTVGGGISSVKDMYNLLRAGADKVSINSAAVRNPKLIEEGAEHFGSQCIVVAIDARKVAEDKWNVYVNGGRVDTGIDAIGWAKRVTELGAGEILLTSMDADGTKNGYDLRLTEEISKSVSVPVIASGGCGHADHIIEVFQKTTVDAALAASIFHYGEATIGDVKRKLRNANVEVRL.

Active-site residues include Asp-11 and Asp-130.

This sequence belongs to the HisA/HisF family. Heterodimer of HisH and HisF.

The protein localises to the cytoplasm. The enzyme catalyses 5-[(5-phospho-1-deoxy-D-ribulos-1-ylimino)methylamino]-1-(5-phospho-beta-D-ribosyl)imidazole-4-carboxamide + L-glutamine = D-erythro-1-(imidazol-4-yl)glycerol 3-phosphate + 5-amino-1-(5-phospho-beta-D-ribosyl)imidazole-4-carboxamide + L-glutamate + H(+). It functions in the pathway amino-acid biosynthesis; L-histidine biosynthesis; L-histidine from 5-phospho-alpha-D-ribose 1-diphosphate: step 5/9. Functionally, IGPS catalyzes the conversion of PRFAR and glutamine to IGP, AICAR and glutamate. The HisF subunit catalyzes the cyclization activity that produces IGP and AICAR from PRFAR using the ammonia provided by the HisH subunit. The chain is Imidazole glycerol phosphate synthase subunit HisF from Bacillus cereus (strain Q1).